A 671-amino-acid polypeptide reads, in one-letter code: Solute carrier family 53 member 1 (671 aa).

Positions 1–193 (MKFAEHLTAH…DIDRLIQETE (193 aa)) are important for promoting lysosomal/autophagosomal degradation of PXo bodies following inorganic phosphate (Pi) starvation. Over 1-228 (MKFAEHLTAH…EQQSPWTTFK (228 aa)) the chain is Cytoplasmic. Residues 2–218 (KFAEHLTAHI…MKRLRVPPLG (217 aa)) enclose the SPX domain. The important for inositol polyphosphate binding stretch occupies residues 152–159 (KILKKHDK). Residues 229–253 (VGLFSGAFVVLFITVVIAAMFYGFG) form a helical membrane-spanning segment. The Extracellular segment spans residues 254-255 (EN). The helical transmembrane segment at 256–287 (WRAGMRMFRAPFLIIECLFLWGVNVYGWRSSG) threads the bilayer. The Cytoplasmic segment spans residues 288–300 (VNHVLIFELDPRN). Residues 301–328 (HLSEQNIMEVASVFGVIWACCVLSYIFC) form a helical membrane-spanning segment. At 329 to 334 (DPLGIP) the chain is on the extracellular side. The helical transmembrane segment at 335 to 356 (QYAAPLCLYTLMAAFLLNPTKT) threads the bilayer. Positions 357 to 374 (FHHEARFWAIRILIRVIM) form an intramembrane region, helical. Residues 375–379 (APFCF) are Cytoplasmic-facing. A discontinuously helical membrane pass occupies residues 380-413 (VNFADFWLADQLNSMVPAFLDIPFLICFFGRSPT). 2 residues coordinate phosphate: Asp-389 and Asn-392. At 414 to 415 (WH) the chain is on the extracellular side. The discontinuously helical transmembrane segment at 416-455 (KAGKAASHCVEYVSLLHPIVAIMPAYFRFAQCIRRYRDTK) threads the bilayer. Residues 423–627 (HCVEYVSLLH…DCSDQTTILR (205 aa)) enclose the EXS domain. Position 456 (Glu-456) is a topological domain, cytoplasmic. A helical transmembrane segment spans residues 457–488 (SFPHLVNAAKYATSFFVVIFAHKYHTTTDTYP). Phosphate-binding residues include Lys-466 and Tyr-467. Over 489-491 (LSK) the chain is Extracellular. Residues 492 to 519 (ENPWFYCWITAAIFSSCYAYTWDIKMDW) traverse the membrane as a helical segment. At 520–538 (GLFDSKAGDNRFLREEIVY) the chain is on the cytoplasmic side. Residues 539-570 (SSTWFYYFGIIEDLILRFSWTLSMSLIEAGYI) form a discontinuously helical membrane-spanning segment. 3 residues coordinate phosphate: Arg-555, Arg-586, and Arg-587. A helical membrane pass occupies residues 571–609 (EGDVMMTILSPLEVFRRFIWNYFRLENEHLNNVGKFRAV). The Cytoplasmic portion of the chain corresponds to 610-671 (RDISVAPMDC…QGESIEDLCS (62 aa)).

This sequence belongs to the SYG1 (TC 2.A.94) family. Homodimer. Interacts with the FAR/SIN/STRIPAK complex members Cka and Pp2A-29B. As to expression, detected in PXo bodies found in the enterocytes and progenitors of the midgut and in the hindgut, but rarely occur in the Malpighian tubules, crop, brain, muscles and germlines (at protein level).

The protein resides in the membrane. It carries out the reaction phosphate(in) = phosphate(out). In terms of biological role, inorganic ion transporter that mediates phosphate ion export across the cell membrane. Plays a major role in phosphate homeostasis, preventing intracellular phosphate accumulation and possible calcium phosphate precipitation, ultimately preserving calcium signaling. Binds inositol hexakisphosphate (Ins6P) and similar inositol polyphosphates, such as 5-diphospho-inositol pentakisphosphate (5-InsP7), which are important intracellular signaling molecules involved in regulation of phosphate flux. In enterocytes and differentiating progenitors of the gut, promotes the biogenesis and maintenance of organelles called PXo bodies that store intracellular inorganic phosphate (Pi), and also regulates Cka-JNK mediated tissue homeostasis in response to Pi availability in these tissues. Under conditions of adequate Pi, transports Pi into PXo bodies which convert and store the Pi in the form of phospholipids. It also inhibits Cka at the post-transcriptional level to prevent Cka-bsk/JNK mediated cell proliferation. Upon Pi starvation, Pxo expression is down-regulated resulting in the PXo bodies decreasing in phospholipid content until they undergo lysosomal/autophagosomal degradation and release the stored Pi back into the cytosol for use by the cell. Decrease in Pxo expression also activates the Cka protein, which moves to the nucleus to activate bsk/JNK which then induces nearby progenitor cells to proliferate and form new absorptive cells, probably helping the organism to cope with the nutrient deficiency by maximizing absorption of dietary Pi. The sequence is that of Solute carrier family 53 member 1 from Drosophila melanogaster (Fruit fly).